The following is a 171-amino-acid chain: Lipoprotein signal peptidase (171 aa).

A run of 3 helical transmembrane segments spans residues Ser8–Val28, Trp64–Leu84, and Ala99–Val119. Residues Asp120 and Asp138 contribute to the active site. Residues Val133–Phe153 traverse the membrane as a helical segment.

The protein belongs to the peptidase A8 family.

The protein resides in the cell inner membrane. The enzyme catalyses Release of signal peptides from bacterial membrane prolipoproteins. Hydrolyzes -Xaa-Yaa-Zaa-|-(S,diacylglyceryl)Cys-, in which Xaa is hydrophobic (preferably Leu), and Yaa (Ala or Ser) and Zaa (Gly or Ala) have small, neutral side chains.. It participates in protein modification; lipoprotein biosynthesis (signal peptide cleavage). Functionally, this protein specifically catalyzes the removal of signal peptides from prolipoproteins. This chain is Lipoprotein signal peptidase, found in Haemophilus influenzae (strain PittGG).